Reading from the N-terminus, the 302-residue chain is Polyadenylate-binding protein 2 (302 aa).

A compositionally biased stretch (low complexity) spans 1–12 (MAAAAAAAAAAG). Positions 1 to 111 (MAAAAAAAAA…EADPGDGAIE (111 aa)) are disordered. Position 2 is an N-acetylalanine (Ala2). Residues 2 to 141 (AAAAAAAAAA…LKELQNEVEK (140 aa)) form an interaction with SKIP region. Arg17 bears the Omega-N-methylarginine mark. At Ser19 the chain carries Phosphoserine. Gly residues predominate over residues 30–47 (GAGGEAGEGDPGGAGDYG). The segment covering 51–68 (ESEELEPGELLPEPEPEE) has biased composition (acidic residues). At Ser52 the chain carries Phosphoserine. Residues 73–83 (PRAPPGAPGPG) show a composition bias toward pro residues. At Ser91 the chain carries Phosphoserine. The stretch at 111 to 147 (EDPELEAIKARVREMEEEAEKLKELQNEVEKQMNMSP) forms a coiled coil. Residues 115-143 (LEAIKARVREMEEEAEKLKELQNEVEKQM) are stimulates PAPOLA. Phosphoserine is present on residues Ser146 and Ser231. In terms of domain architecture, RRM spans 168–245 (RSIYVGNVDY…RQIKVIPKRT (78 aa)). Asymmetric dimethylarginine; alternate is present on residues Arg234, Arg255, and Arg259. An omega-N-methylarginine; alternate mark is found at Arg234, Arg255, and Arg259. The tract at residues 255–302 (RGFPRSRYRARTTNYNSSRSRFYSGFNSRPRGRIYRGRARATSWYSPY) is strong poly(A) affinity and self-association. Residues Arg261, Arg263, Arg265, Arg273, Arg275, Arg283, Arg285, Arg287, Arg290, Arg292, and Arg294 each carry the asymmetric dimethylarginine modification. The tract at residues 282-302 (SRPRGRIYRGRARATSWYSPY) is interaction with PAPOLA.

As to quaternary structure, monomer and homooligomer. Identified in a IGF2BP1-dependent mRNP granule complex containing untranslated mRNAs. Binds RNA as a monomer and oligomerizes when bound to poly(A). Interacts with PAPOLA, but only in presence of oligo(A) RNA. Interacts with NUDT21/CPSF5 and transportin. Associates in a ternary complex with CPSF4 and NS/NS1 and interaction with NS/NS1, blocks nuclear export of host cell mRNAs. Associates in a single complex with SKIP and MYOD1 and interacts with SKIP in differentiated myocytes. May interact with SETX. Interacts (via RRM domain and C-terminal arginine-rich region) with ZFP36 (via hypophosphorylated form); this interaction occurs in the nucleus in a RNA-independent manner, decreases in presence of single-stranded poly(A) RNA-oligomer and in a p38-dependent-manner and may down-regulated RNA poly(A) polymerase activity. Component of the poly(A) tail exosome targeting (PAXT) complex composed of PABPN1, ZFC3H1 and MTREX. Interacts with ZFC3H1 in a RNase-insensitive manner. Interacts with FRG1. Interacts with ZC3H11A. In terms of processing, arginine dimethylation is asymmetric and involves PRMT1 and PRMT3. It does not influence the RNA binding properties. Ubiquitous.

The protein localises to the cytoplasm. It localises to the nucleus. Its subcellular location is the nucleus speckle. In terms of biological role, involved in the 3'-end formation of mRNA precursors (pre-mRNA) by the addition of a poly(A) tail of 200-250 nt to the upstream cleavage product. Stimulates poly(A) polymerase (PAPOLA) conferring processivity on the poly(A) tail elongation reaction and also controls the poly(A) tail length. Increases the affinity of poly(A) polymerase for RNA. Is also present at various stages of mRNA metabolism including nucleocytoplasmic trafficking and nonsense-mediated decay (NMD) of mRNA. Cooperates with SKIP to synergistically activate E-box-mediated transcription through MYOD1 and may regulate the expression of muscle-specific genes. Binds to poly(A) and to poly(G) with high affinity. May protect the poly(A) tail from degradation. Subunit of the trimeric poly(A) tail exosome targeting (PAXT) complex, a complex that directs a subset of long and polyadenylated poly(A) RNAs for exosomal degradation. The RNA exosome is fundamental for the degradation of RNA in eukaryotic nuclei. Substrate targeting is facilitated by its cofactor MTREX, which links to RNA-binding protein adapters. This Mus musculus (Mouse) protein is Polyadenylate-binding protein 2 (Pabpn1).